The following is a 343-amino-acid chain: 4-hydroxy-2-oxovalerate aldolase 2 (343 aa).

The Pyruvate carboxyltransferase domain occupies 8-260 (ITVHDMSLRD…ETGVDVFAIS (253 aa)). 16-17 (RD) is a substrate binding site. A Mn(2+)-binding site is contributed by Asp-17. His-20 functions as the Proton acceptor in the catalytic mechanism. Positions 170 and 199 each coordinate substrate. Residues His-199 and His-201 each contribute to the Mn(2+) site. Residue Tyr-290 coordinates substrate.

It belongs to the 4-hydroxy-2-oxovalerate aldolase family.

The catalysed reaction is (S)-4-hydroxy-2-oxopentanoate = acetaldehyde + pyruvate. In Burkholderia lata (strain ATCC 17760 / DSM 23089 / LMG 22485 / NCIMB 9086 / R18194 / 383), this protein is 4-hydroxy-2-oxovalerate aldolase 2.